We begin with the raw amino-acid sequence, 238 residues long: Ribonuclease 3 (238 aa).

Residues 4–130 (IQTLFQTLNI…LFGAIYLDLG (127 aa)) enclose the RNase III domain. Glu-45 is a Mg(2+) binding site. Asp-49 is an active-site residue. Residues Asp-116 and Glu-119 each coordinate Mg(2+). Glu-119 is an active-site residue. In terms of domain architecture, DRBM spans 154 to 222 (DFKTQLQEIV…AQQALSKVAK (69 aa)). A disordered region spans residues 215–238 (QALSKVAKPKDLLNNKGGKEKELQ). Positions 222 to 238 (KPKDLLNNKGGKEKELQ) are enriched in basic and acidic residues.

It belongs to the ribonuclease III family. As to quaternary structure, homodimer. The cofactor is Mg(2+).

It localises to the cytoplasm. The catalysed reaction is Endonucleolytic cleavage to 5'-phosphomonoester.. Its function is as follows. Digests double-stranded RNA. Involved in the processing of primary rRNA transcript to yield the immediate precursors to the large and small rRNAs (23S and 16S). Processes some mRNAs, and tRNAs when they are encoded in the rRNA operon. Processes pre-crRNA and tracrRNA of type II CRISPR loci if present in the organism. This is Ribonuclease 3 from Onion yellows phytoplasma (strain OY-M).